The primary structure comprises 569 residues: Melanophilin (569 aa).

A RabBD domain is found at 4 to 124 (KLDLSKLTDD…MGSLEWYYGH (121 aa)). An FYVE-type zinc finger spans residues 58 to 112 (HLNETHCARCLQPYRLLVAPKRQCLDCHLFTCQDCSHAHPEEEGWLCDPCHLARV). Residues 143-430 (GRLQGGGGPE…MQPGRTTDQE (288 aa)) form a disordered region. Composition is skewed to basic and acidic residues over residues 352–362 (ETLKRKLEEMT) and 379–390 (EEEAGLNRKTSI). Residues 404–415 (SGQTSRQETSPR) are compositionally biased toward polar residues. Positions 431–465 (LLELEDRVAVTASEVQQVESEVSNIKSKIAALQAA) form a coiled coil. Positions 490 to 569 (GRLGQTPKDP…FAKPVMTQRP (80 aa)) are disordered. The segment covering 526 to 535 (SQDKAGDSFD) has biased composition (basic and acidic residues).

In terms of assembly, binds RAB27A that has been activated by GTP-binding via its N-terminus. Binds MYO5A via its C-terminal coiled coil domain.

The protein localises to the melanosome. Its function is as follows. Rab effector protein involved in melanosome transport. Serves as link between melanosome-bound RAB27A and the motor protein MYO5A. In Felis catus (Cat), this protein is Melanophilin (MLPH).